We begin with the raw amino-acid sequence, 201 residues long: NADH-quinone oxidoreductase subunit C (201 aa).

It belongs to the complex I 30 kDa subunit family. In terms of assembly, NDH-1 is composed of 14 different subunits. Subunits NuoB, C, D, E, F, and G constitute the peripheral sector of the complex.

The protein localises to the cell inner membrane. It carries out the reaction a quinone + NADH + 5 H(+)(in) = a quinol + NAD(+) + 4 H(+)(out). Its function is as follows. NDH-1 shuttles electrons from NADH, via FMN and iron-sulfur (Fe-S) centers, to quinones in the respiratory chain. The immediate electron acceptor for the enzyme in this species is believed to be ubiquinone. Couples the redox reaction to proton translocation (for every two electrons transferred, four hydrogen ions are translocated across the cytoplasmic membrane), and thus conserves the redox energy in a proton gradient. The polypeptide is NADH-quinone oxidoreductase subunit C (Mesorhizobium japonicum (strain LMG 29417 / CECT 9101 / MAFF 303099) (Mesorhizobium loti (strain MAFF 303099))).